A 699-amino-acid chain; its full sequence is Cyclic AMP-dependent transcription factor ATF-6 beta (699 aa).

A2 bears the N-acetylalanine mark. The Cytoplasmic segment spans residues 2–393 (AELMLLSEIA…GLKLGSGNRK (392 aa)). Disordered regions lie at residues 59-114 (SLDV…QVPG), 218-246 (VQIS…PKPV), and 290-313 (EGPA…PGNS). A compositionally biased stretch (pro residues) spans 68–78 (PPEPPWDPLPI). Residues 86–109 (SEPSSPCSSSSLSSESSHLSTEPP) are compositionally biased toward low complexity. Residues 322 to 385 (LLKRQQRMIK…EALLAENSGL (64 aa)) form the bZIP domain. The basic motif stretch occupies residues 324 to 344 (KRQQRMIKNRESACQSRRKKK). Residues 347–354 (LQGLEARL) are leucine-zipper. The helical; Signal-anchor for type II membrane protein transmembrane segment at 394 to 414 (VVCIMVFLLFIAFNFGPVSIS) threads the bilayer. At 415-699 (EPPPAPMSPR…ASQPLYLNHP (285 aa)) the chain is on the lumenal side. The disordered stretch occupies residues 417–474 (PPAPMSPRMSREEPRPQRHLLGFSEPGPAHGMEPLREAAQSPGEQQPSSAGRPSFRNL). Residues 458–467 (PGEQQPSSAG) show a composition bias toward polar residues. N-linked (GlcNAc...) asparagine glycans are attached at residues N473 and N502. Basic residues predominate over residues 519-529 (RHQRGRRKIPH). A disordered region spans residues 519–563 (RHQRGRRKIPHRAQERQKSQLRKKSPPVKPVPTQPPGPPERDPVG). The segment covering 545 to 556 (PVKPVPTQPPGP) has biased composition (pro residues). N607, N624, and N673 each carry an N-linked (GlcNAc...) asparagine glycan. The tract at residues 657–699 (STVPPSLRKQPSPSPGNTTGGPLPGSAASPAHQASQPLYLNHP) is disordered. The segment covering 680–693 (PGSAASPAHQASQP) has biased composition (low complexity).

This sequence belongs to the bZIP family. ATF subfamily. As to quaternary structure, homodimer and heterodimer with ATF6-alpha. The dimer interacts with the nuclear transcription factor Y (NF-Y) trimer through direct binding to NF-Y subunit C (NF-YC). Post-translationally, N-glycosylated. In terms of processing, during unfolded protein response, a fragment of approximately 60 kDa containing the cytoplasmic transcription factor domain is released by proteolysis. The cleavage is probably performed sequentially by site-1 (MBTPS1, S1P) and site-2 (MBTPS2, S2P) proteases.

The protein resides in the endoplasmic reticulum membrane. Its subcellular location is the nucleus. In terms of biological role, precursor of the transcription factor form (Processed cyclic AMP-dependent transcription factor ATF-6 beta), which is embedded in the endoplasmic reticulum membrane. Endoplasmic reticulum stress promotes processing of this form, releasing the transcription factor form that translocates into the nucleus, where it activates transcription of genes involved in the unfolded protein response (UPR). Transcription factor that acts in the unfolded protein response (UPR) pathway by activating UPR target genes induced during ER stress. Binds DNA on the 5'-CCAC[GA]-3' half of the ER stress response element (ERSE) (5'-CCAATN(9)CCAC[GA]-3') when NF-Y is bound to ERSE. The polypeptide is Cyclic AMP-dependent transcription factor ATF-6 beta (Atf6b) (Mus musculus (Mouse)).